Here is an 815-residue protein sequence, read N- to C-terminus: Translation initiation factor IF-2 (815 aa).

A compositionally biased stretch (basic and acidic residues) spans 153-176; it reads VQEKEAEKKVEKLKTADKPKEGNK. Residues 153–219 are disordered; the sequence is VQEKEAEKKV…THLSQKIQAE (67 aa). Over residues 191-209 the composition is skewed to basic residues; that stretch reads KQLHVARHNPNRRLKKKDR. The 168-residue stretch at 315 to 482 folds into the tr-type G domain; it reads ARPPIVTIMG…AISLTAEILE (168 aa). The segment at 324 to 331 is G1; the sequence is GHVDHGKT. Residue 324–331 coordinates GTP; it reads GHVDHGKT. Positions 349–353 are G2; sequence GITQH. The tract at residues 370–373 is G3; that stretch reads DTPG. Residues 370 to 374 and 424 to 427 contribute to the GTP site; these read DTPGH and NKID. Residues 424-427 form a G4 region; it reads NKID. Residues 460 to 462 are G5; that stretch reads SAH.

This sequence belongs to the TRAFAC class translation factor GTPase superfamily. Classic translation factor GTPase family. IF-2 subfamily.

It localises to the cytoplasm. One of the essential components for the initiation of protein synthesis. Protects formylmethionyl-tRNA from spontaneous hydrolysis and promotes its binding to the 30S ribosomal subunits. Also involved in the hydrolysis of GTP during the formation of the 70S ribosomal complex. The protein is Translation initiation factor IF-2 of Vesicomyosocius okutanii subsp. Calyptogena okutanii (strain HA).